Reading from the N-terminus, the 91-residue chain is Peptide Ctry2146 (91 aa).

An N-terminal signal peptide occupies residues 1 to 23 (MKTQTLLVTFLVVLLMVATQTEA). Residue L33 is modified to Leucine amide. Residues 37 to 91 (GLLDGLLGKRGLLFGKRGPLFGKRALTNQDFLDFAYDPSLSAADMDALEMLFEDY) constitute a propeptide that is removed on maturation.

Belongs to the non-disulfide-bridged peptide (NDBP) superfamily. Short antimicrobial peptide (group 4) family. Expressed by the venom gland.

It is found in the secreted. The protein resides in the target cell membrane. In terms of biological role, antimicrobial peptide. The polypeptide is Peptide Ctry2146 (Chaerilus tryznai (Scorpion)).